A 160-amino-acid chain; its full sequence is SsrA-binding protein (160 aa).

This sequence belongs to the SmpB family.

The protein resides in the cytoplasm. Functionally, required for rescue of stalled ribosomes mediated by trans-translation. Binds to transfer-messenger RNA (tmRNA), required for stable association of tmRNA with ribosomes. tmRNA and SmpB together mimic tRNA shape, replacing the anticodon stem-loop with SmpB. tmRNA is encoded by the ssrA gene; the 2 termini fold to resemble tRNA(Ala) and it encodes a 'tag peptide', a short internal open reading frame. During trans-translation Ala-aminoacylated tmRNA acts like a tRNA, entering the A-site of stalled ribosomes, displacing the stalled mRNA. The ribosome then switches to translate the ORF on the tmRNA; the nascent peptide is terminated with the 'tag peptide' encoded by the tmRNA and targeted for degradation. The ribosome is freed to recommence translation, which seems to be the essential function of trans-translation. This is SsrA-binding protein from Cronobacter sakazakii (strain ATCC BAA-894) (Enterobacter sakazakii).